The chain runs to 1312 residues: Beta-N-acetylhexosaminidase (1312 aa).

The signal sequence occupies residues 1–33 (MKHEKQQRFSIRKYAVGAASVLIGFAFQAQTVA). Positions 38 to 59 (TPTTTENQPTIHTVSDSPQSSE) are enriched in polar residues. Residues 38–178 (TPTTTENQPT…ATEAGKERAA (141 aa)) form a disordered region. The segment covering 118–177 (AEKETANKKAEEASPKKEEAKEVDSKESNTDKTDKDKPAKKDEAKAEADKPATEAGKERA) has biased composition (basic and acidic residues). Catalytic domain stretches follow at residues 176-616 (RAAT…TPEA) and 621-1046 (EAKR…PAVT). G5 domains follow at residues 1059–1138 (NVET…GAPV) and 1150–1230 (TTEV…GTMV). The disordered stretch occupies residues 1244–1290 (EEKPKLEIPSQPAPSTAPAEESKVLPQDPAPVVTEKKLPETGTHDSA). Basic and acidic residues predominate over residues 1277 to 1286 (TEKKLPETGT). Residues 1281-1285 (LPETG) carry the LPXTG sorting signal motif. At T1284 the chain carries Pentaglycyl murein peptidoglycan amidated threonine. The propeptide at 1285–1312 (GTHDSAGLVVAGLMSTLAAYGLTKRKED) is removed by sortase.

The protein belongs to the glycosyl hydrolase 20 family.

It localises to the secreted. The protein resides in the cell wall. The enzyme catalyses Hydrolysis of terminal non-reducing N-acetyl-D-hexosamine residues in N-acetyl-beta-D-hexosaminides.. The sequence is that of Beta-N-acetylhexosaminidase (strH) from Streptococcus pneumoniae serotype 4 (strain ATCC BAA-334 / TIGR4).